Consider the following 108-residue polypeptide: Nitrogenase-stabilizing/protective protein NifW (108 aa).

It belongs to the NifW family. Homotrimer; associates with NifD.

Its function is as follows. May protect the nitrogenase Fe-Mo protein from oxidative damage. The sequence is that of Nitrogenase-stabilizing/protective protein NifW from Zymomonas mobilis subsp. mobilis (strain ATCC 31821 / ZM4 / CP4).